The primary structure comprises 430 residues: Adenylosuccinate synthetase (430 aa).

GTP contacts are provided by residues 13 to 19 (GDEGKGK) and 41 to 43 (GHT). The active-site Proton acceptor is D14. D14 and G41 together coordinate Mg(2+). Residues 14-17 (DEGK), 39-42 (NAGH), T130, R144, Q225, T240, and R304 contribute to the IMP site. H42 acts as the Proton donor in catalysis. Residue 300–306 (ATTGRAR) participates in substrate binding. Residues R306, 332–334 (KLD), and 414–416 (STG) contribute to the GTP site.

It belongs to the adenylosuccinate synthetase family. As to quaternary structure, homodimer. Mg(2+) serves as cofactor.

It is found in the cytoplasm. The catalysed reaction is IMP + L-aspartate + GTP = N(6)-(1,2-dicarboxyethyl)-AMP + GDP + phosphate + 2 H(+). It participates in purine metabolism; AMP biosynthesis via de novo pathway; AMP from IMP: step 1/2. Its function is as follows. Plays an important role in the de novo pathway of purine nucleotide biosynthesis. Catalyzes the first committed step in the biosynthesis of AMP from IMP. The protein is Adenylosuccinate synthetase of Pseudomonas syringae pv. syringae (strain B728a).